The sequence spans 164 residues: Protein SprT (164 aa).

Positions 13–156 (YQQAEAFFKR…LCRRCREPLV (144 aa)) constitute a SprT-like domain. H69 is a binding site for Zn(2+). E70 is an active-site residue. H73 provides a ligand contact to Zn(2+).

Belongs to the SprT family. The cofactor is Zn(2+).

Its subcellular location is the cytoplasm. This Pseudomonas syringae pv. syringae (strain B728a) protein is Protein SprT.